Here is a 657-residue protein sequence, read N- to C-terminus: Tetracycline resistance protein TetQ (657 aa).

In terms of domain architecture, tr-type G spans 17–260 (MNIINLGILA…AISSFILPPE (244 aa)). Residues 26-33 (AHIDAGKT), 90-94 (DTPGH), and 144-147 (NKID) contribute to the GTP site.

This sequence belongs to the TRAFAC class translation factor GTPase superfamily. Classic translation factor GTPase family. TetM/TetO subfamily.

Its function is as follows. Abolishes the inhibitory effect of tetracycline on protein synthesis by non-covalently modifying ribosomes. Confers mild resistance to tetracycline when expressed in E.coli. This chain is Tetracycline resistance protein TetQ (tetQ), found in Bacteroides fragilis.